The sequence spans 304 residues: Large ribosomal subunit protein uL18y (304 aa).

The protein belongs to the universal ribosomal protein uL18 family. Component of the large ribosomal subunit (LSU).

It localises to the cytoplasm. The protein resides in the nucleus. In terms of biological role, component of the ribosome, a large ribonucleoprotein complex responsible for the synthesis of proteins in the cell. The small ribosomal subunit (SSU) binds messenger RNAs (mRNAs) and translates the encoded message by selecting cognate aminoacyl-transfer RNA (tRNA) molecules. The large subunit (LSU) contains the ribosomal catalytic site termed the peptidyl transferase center (PTC), which catalyzes the formation of peptide bonds, thereby polymerizing the amino acids delivered by tRNAs into a polypeptide chain. The nascent polypeptides leave the ribosome through a tunnel in the LSU and interact with protein factors that function in enzymatic processing, targeting, and the membrane insertion of nascent chains at the exit of the ribosomal tunnel. This Oryza sativa subsp. japonica (Rice) protein is Large ribosomal subunit protein uL18y (RPL5B).